Consider the following 550-residue polypeptide: CTP synthase (550 aa).

The interval 1–277 is amidoligase domain; the sequence is MNGSADAGPR…GRAVERALGL (277 aa). Ser-23 serves as a coordination point for CTP. Ser-23 is a UTP binding site. 24–29 serves as a coordination point for ATP; sequence SLGKGI. Tyr-64 provides a ligand contact to L-glutamine. ATP is bound at residue Asp-81. Residues Asp-81 and Glu-151 each coordinate Mg(2+). CTP contacts are provided by residues 158-160, 198-203, and Lys-234; these read DIE and KTKPTQ. UTP contacts are provided by residues 198-203 and Lys-234; that span reads KTKPTQ. Residue Val-252 coordinates ATP. Residues 302–549 enclose the Glutamine amidotransferase type-1 domain; that stretch reads KIAIAGKYVK…VEAALAYQER (248 aa). Gly-364 contributes to the L-glutamine binding site. Cys-391 functions as the Nucleophile; for glutamine hydrolysis in the catalytic mechanism. L-glutamine-binding positions include 392–395, Glu-415, and Arg-472; that span reads LGLQ. Active-site residues include His-522 and Glu-524.

This sequence belongs to the CTP synthase family. As to quaternary structure, homotetramer in the presence of UTP and ATP. Is in a protein concentration-dependent equilibrium between monomer, dimer, and tetramer in the absence of UTP and ATP.

The catalysed reaction is UTP + L-glutamine + ATP + H2O = CTP + L-glutamate + ADP + phosphate + 2 H(+). It catalyses the reaction L-glutamine + H2O = L-glutamate + NH4(+). The enzyme catalyses UTP + NH4(+) + ATP = CTP + ADP + phosphate + 2 H(+). It participates in pyrimidine metabolism; CTP biosynthesis via de novo pathway; CTP from UDP: step 2/2. Allosterically activated by GTP, when glutamine is the substrate. GTP has no effect on the reaction when ammonia is the substrate. The allosteric effector GTP functions by stabilizing the protein conformation that binds the tetrahedral intermediate(s) formed during glutamine hydrolysis. Inhibited by the product CTP, via allosteric rather than competitive inhibition. In terms of biological role, catalyzes the ATP-dependent amination of UTP to CTP with either L-glutamine or ammonia as the source of nitrogen. Regulates intracellular CTP levels through interactions with the four ribonucleotide triphosphates. The sequence is that of CTP synthase from Thermus thermophilus (strain ATCC 27634 / DSM 579 / HB8).